The primary structure comprises 509 residues: Major envelope glycoprotein (509 aa).

The N-terminal stretch at 1–17 is a signal peptide; it reads MVRTAVLILLLVRFSEP. Asn34, Asn156, Asn194, Asn351, Asn381, and Asn423 each carry an N-linked (GlcNAc...) asparagine; by host glycan. Ser479 is lipidated: O-palmitoyl serine; by host. A helical membrane pass occupies residues 480–502; the sequence is FMLGHAFSFMLTVGVIIFLFCMV. A glycan (N-linked (GlcNAc...) asparagine; by host) is linked at Asn504.

This sequence belongs to the baculoviridae gp64 family. In terms of processing, palmitoylated.

It is found in the virion membrane. The protein resides in the host cell membrane. Its function is as follows. Envelope phosphoglycoprotein which mediates the fusion of viral and host endosomal membranes leading to virus entry into the host cell. The sequence is that of Major envelope glycoprotein (GP67) from Choristoneura fumiferana nuclear polyhedrosis virus (CfMNPV).